Consider the following 320-residue polypeptide: Large ribosomal subunit protein uL10y (320 aa).

The segment at 289 to 320 (AGGGAPAAAKVEEKEESDEEDYGGDFGLFDEE) is disordered. Over residues 302-320 (KEESDEEDYGGDFGLFDEE) the composition is skewed to acidic residues. Residue serine 305 is modified to Phosphoserine. Tyrosine 310 carries the post-translational modification Phosphotyrosine.

Belongs to the universal ribosomal protein uL10 family. In terms of assembly, P0 forms a pentameric complex by interaction with dimers of P1 and P2.

Its function is as follows. Ribosomal protein P0 is the functional equivalent of E.coli protein L10. The protein is Large ribosomal subunit protein uL10y (RPP0B) of Arabidopsis thaliana (Mouse-ear cress).